The chain runs to 152 residues: Probable ribose-5-phosphate isomerase B (152 aa).

12–13 (DH) provides a ligand contact to D-ribulose 5-phosphate. Cys70 acts as the Proton acceptor in catalysis. Position 71–75 (71–75 (GTGVG)) interacts with D-ribulose 5-phosphate. Residue His103 is the Proton donor of the active site. Residues Asp104, Arg114, Arg137, and Arg141 each contribute to the D-ribulose 5-phosphate site.

It belongs to the LacAB/RpiB family. In terms of assembly, homodimer.

The enzyme catalyses aldehydo-D-ribose 5-phosphate = D-ribulose 5-phosphate. The protein operates within carbohydrate degradation; pentose phosphate pathway; D-ribose 5-phosphate from D-ribulose 5-phosphate (non-oxidative stage): step 1/1. In terms of biological role, catalyzes the interconversion of ribulose-5-P and ribose-5-P. This chain is Probable ribose-5-phosphate isomerase B, found in Mycoplasma pneumoniae (strain ATCC 29342 / M129 / Subtype 1) (Mycoplasmoides pneumoniae).